The chain runs to 408 residues: Argininosuccinate synthase (408 aa).

ATP-binding positions include 10–18 (AYSGGLDTS) and alanine 37. L-citrulline contacts are provided by tyrosine 90 and serine 95. Glycine 120 contributes to the ATP binding site. Residues threonine 122, asparagine 126, and aspartate 127 each coordinate L-aspartate. L-citrulline is bound at residue asparagine 126. The L-citrulline site is built by arginine 130, serine 181, serine 190, glutamate 266, and tyrosine 278.

Belongs to the argininosuccinate synthase family. Type 1 subfamily. In terms of assembly, homotetramer.

The protein localises to the cytoplasm. The catalysed reaction is L-citrulline + L-aspartate + ATP = 2-(N(omega)-L-arginino)succinate + AMP + diphosphate + H(+). Its pathway is amino-acid biosynthesis; L-arginine biosynthesis; L-arginine from L-ornithine and carbamoyl phosphate: step 2/3. The protein is Argininosuccinate synthase of Laribacter hongkongensis (strain HLHK9).